The primary structure comprises 244 residues: uncharacterized protein (244 aa).

A WGR domain is found at 1–78 (MKKRFIYHDE…PKFNFMDRYY (78 aa)).

This is an uncharacterized protein from Escherichia coli (strain K12).